A 171-amino-acid chain; its full sequence is Protein-export protein SecB (171 aa).

It belongs to the SecB family. In terms of assembly, homotetramer, a dimer of dimers. One homotetramer interacts with 1 SecA dimer.

The protein resides in the cytoplasm. Functionally, one of the proteins required for the normal export of preproteins out of the cell cytoplasm. It is a molecular chaperone that binds to a subset of precursor proteins, maintaining them in a translocation-competent state. It also specifically binds to its receptor SecA. The protein is Protein-export protein SecB of Histophilus somni (strain 2336) (Haemophilus somnus).